The sequence spans 220 residues: GTP cyclohydrolase 1 (220 aa).

Cysteine 109, histidine 112, and cysteine 180 together coordinate Zn(2+).

This sequence belongs to the GTP cyclohydrolase I family. Toroid-shaped homodecamer, composed of two pentamers of five dimers.

It catalyses the reaction GTP + H2O = 7,8-dihydroneopterin 3'-triphosphate + formate + H(+). It participates in cofactor biosynthesis; 7,8-dihydroneopterin triphosphate biosynthesis; 7,8-dihydroneopterin triphosphate from GTP: step 1/1. The sequence is that of GTP cyclohydrolase 1 from Yersinia pseudotuberculosis serotype O:1b (strain IP 31758).